We begin with the raw amino-acid sequence, 320 residues long: MQTRNTFSWIKEEITRSISVSLMIYIITGASISNAYPIFAQQGYENPREATGRIVCANCHLANKPVDIEVPQAVLPDTVFEAVVRIPYDMQLKQVLANGKKGALNVGAVLILPEGFELAPPDRISPEMKEKIGNLSFQNYRPTKKNILVIGPVPGKKYSEITFPILSPDPASNKDAHFLKYPIYVGGNRGRGQIYPDGNKSNNTVYNATATGIVSKIIRKEKGGYEITITDALDGHQVVDIIPPGPELLVSEGESIKLDQPLTINPNVGGFGQGDAEIVLQDPLRVQGLLFFLASIVFAQIFLVLKKKQFEKVQVSEMNF.

The first 35 residues, 1–35 (MQTRNTFSWIKEEITRSISVSLMIYIITGASISNA), serve as a signal peptide directing secretion. Heme is bound by residues tyrosine 36, cysteine 56, cysteine 59, and histidine 60. The helical transmembrane segment at 286–306 (VQGLLFFLASIVFAQIFLVLK) threads the bilayer.

It belongs to the cytochrome f family. As to quaternary structure, the 4 large subunits of the cytochrome b6-f complex are cytochrome b6, subunit IV (17 kDa polypeptide, petD), cytochrome f and the Rieske protein, while the 4 small subunits are PetG, PetL, PetM and PetN. The complex functions as a dimer. Requires heme as cofactor.

It is found in the plastid. The protein resides in the chloroplast thylakoid membrane. Functionally, component of the cytochrome b6-f complex, which mediates electron transfer between photosystem II (PSII) and photosystem I (PSI), cyclic electron flow around PSI, and state transitions. In Gossypium hirsutum (Upland cotton), this protein is Cytochrome f.